The primary structure comprises 258 residues: F-box/SPRY domain-containing protein 1 (258 aa).

One can recognise an F-box domain in the interval 6–54 (TEYAPDIPDNVLELIFSYLKLQDLRNCSLVCKSWNRFLNDENNEVWRAQ). A B30.2/SPRY domain is found at 64-256 (FKTDLLSVVP…ISMVYLGPPL (193 aa)).

It belongs to the FBXO45/Fsn family. In terms of assembly, component of an E3 ubiquitin ligase complex composed of hiw and Fsn.

The protein resides in the synapse. The protein operates within protein modification; protein ubiquitination. Functionally, required in the presynaptic motoneuron to down-regulate the levels of wnd and restrain synaptic terminal growth at the neuromuscular junction (NMJ). The sequence is that of F-box/SPRY domain-containing protein 1 from Aedes aegypti (Yellowfever mosquito).